We begin with the raw amino-acid sequence, 274 residues long: uncharacterized protein (274 aa).

Belongs to the class IV-like SAM-binding methyltransferase superfamily. RNA methyltransferase TrmH family.

This is an uncharacterized protein from Synechocystis sp. (strain ATCC 27184 / PCC 6803 / Kazusa).